The chain runs to 174 residues: NADH-quinone oxidoreductase subunit C (174 aa).

Belongs to the complex I 30 kDa subunit family. In terms of assembly, NDH-1 is composed of 14 different subunits. Subunits NuoB, C, D, E, F, and G constitute the peripheral sector of the complex.

The protein localises to the cell membrane. It carries out the reaction a quinone + NADH + 5 H(+)(in) = a quinol + NAD(+) + 4 H(+)(out). NDH-1 shuttles electrons from NADH, via FMN and iron-sulfur (Fe-S) centers, to quinones in the respiratory chain. The immediate electron acceptor for the enzyme in this species is believed to be ubiquinone. Couples the redox reaction to proton translocation (for every two electrons transferred, four hydrogen ions are translocated across the cytoplasmic membrane), and thus conserves the redox energy in a proton gradient. This chain is NADH-quinone oxidoreductase subunit C, found in Roseiflexus sp. (strain RS-1).